The primary structure comprises 184 residues: Large ribosomal subunit protein uL5c (184 aa).

This sequence belongs to the universal ribosomal protein uL5 family. Part of the 50S ribosomal subunit; contacts the 5S rRNA.

Its subcellular location is the plastid. The protein localises to the chloroplast. In terms of biological role, binds 5S rRNA, forms part of the central protuberance of the 50S subunit. The sequence is that of Large ribosomal subunit protein uL5c (rpl5) from Mesostigma viride (Green alga).